A 306-amino-acid chain; its full sequence is 4-hydroxy-tetrahydrodipicolinate synthase (306 aa).

Residue Thr46 coordinates pyruvate. Tyr134 acts as the Proton donor/acceptor in catalysis. Lys162 (schiff-base intermediate with substrate) is an active-site residue. Val204 lines the pyruvate pocket.

It belongs to the DapA family. In terms of assembly, homotetramer; dimer of dimers.

It localises to the cytoplasm. It carries out the reaction L-aspartate 4-semialdehyde + pyruvate = (2S,4S)-4-hydroxy-2,3,4,5-tetrahydrodipicolinate + H2O + H(+). It participates in amino-acid biosynthesis; L-lysine biosynthesis via DAP pathway; (S)-tetrahydrodipicolinate from L-aspartate: step 3/4. Catalyzes the condensation of (S)-aspartate-beta-semialdehyde [(S)-ASA] and pyruvate to 4-hydroxy-tetrahydrodipicolinate (HTPA). This chain is 4-hydroxy-tetrahydrodipicolinate synthase, found in Synechococcus sp. (strain JA-2-3B'a(2-13)) (Cyanobacteria bacterium Yellowstone B-Prime).